The sequence spans 216 residues: Squamosa promoter-binding-like protein 13 (216 aa).

A disordered region spans residues 32–110 (GDGGAALPSP…PSGGGGGPRC (79 aa)). A compositionally biased stretch (low complexity) spans 67–91 (SSSAAVAAGASSSSSSSSVAAAARR). The span at 94-108 (GRAGGGAPSGGGGGP) shows a compositional bias: gly residues. An SBP-type zinc finger spans residues 107–184 (GPRCQVERCG…AGHNERRRKS (78 aa)). Residues Cys110, Cys115, Cys132, His135, Cys151, Cys154, His158, and Cys170 each coordinate Zn(2+). The short motif at 167 to 183 (KRSCRRRLAGHNERRRK) is the Bipartite nuclear localization signal element. The interval 175–216 (AGHNERRRKSAADTAHGENCRHADQDAGRSHQGTGNPPFQIR) is disordered. The span at 189–203 (AHGENCRHADQDAGR) shows a compositional bias: basic and acidic residues. A compositionally biased stretch (polar residues) spans 205–216 (HQGTGNPPFQIR).

In terms of tissue distribution, ubiquitous.

Its subcellular location is the nucleus. In terms of biological role, trans-acting factor that binds specifically to the consensus nucleotide sequence 5'-TNCGTACAA-3'. May be involved in panicle development. This is Squamosa promoter-binding-like protein 13 (SPL13) from Oryza sativa subsp. japonica (Rice).